The chain runs to 460 residues: tRNA(Ile)-lysidine synthase (460 aa).

Residue 30-35 (SGGLDS) coordinates ATP.

It belongs to the tRNA(Ile)-lysidine synthase family.

The protein localises to the cytoplasm. The catalysed reaction is cytidine(34) in tRNA(Ile2) + L-lysine + ATP = lysidine(34) in tRNA(Ile2) + AMP + diphosphate + H(+). Its function is as follows. Ligates lysine onto the cytidine present at position 34 of the AUA codon-specific tRNA(Ile) that contains the anticodon CAU, in an ATP-dependent manner. Cytidine is converted to lysidine, thus changing the amino acid specificity of the tRNA from methionine to isoleucine. The chain is tRNA(Ile)-lysidine synthase from Yersinia pestis.